The primary structure comprises 2005 residues: Structural maintenance of chromosomes flexible hinge domain-containing protein 1 (2005 aa).

A compositionally biased stretch (gly residues) spans 1–13 (MAAADGGGPGGAS). The interval 1–23 (MAAADGGGPGGASVGTEEDGGGV) is disordered. A2 is subject to N-acetylalanine. Positions 111–702 (TKERIDFLPH…LSVTWPEGDE (592 aa)) are ATPase activity domain. K1349 bears the N6-acetyllysine mark. Glycyl lysine isopeptide (Lys-Gly) (interchain with G-Cter in SUMO2) cross-links involve residues K1374 and K1496. T1499 carries the post-translational modification Phosphothreonine. The region spanning 1720 to 1847 (GDVLGKIAHL…DNLDAANHYR (128 aa)) is the SMC hinge domain. K1802 carries the N6-succinyllysine modification. At S1974 the chain carries Phosphoserine.

Belongs to the SMC family. Highly divergent. In terms of assembly, homodimer; homodimerizes via its SMC hinge domain. Interacts with LRIF1. Sumoylated with SUMO1.

The protein localises to the chromosome. The enzyme catalyses ATP + H2O = ADP + phosphate + H(+). Functionally, non-canonical member of the structural maintenance of chromosomes (SMC) protein family that plays a key role in epigenetic silencing by regulating chromatin architecture. Promotes heterochromatin formation in both autosomes and chromosome X, probably by mediating the merge of chromatin compartments. Plays a key role in chromosome X inactivation in females by promoting the spreading of heterochromatin. Recruited to inactivated chromosome X by Xist RNA and acts by mediating the merge of chromatin compartments: promotes random chromatin interactions that span the boundaries of existing structures, leading to create a compartment-less architecture typical of inactivated chromosome X. Required to facilitate Xist RNA spreading. Also required for silencing of a subset of clustered autosomal loci in somatic cells, such as the DUX4 locus. Has ATPase activity; may participate in structural manipulation of chromatin in an ATP-dependent manner as part of its role in gene expression regulation. Also plays a role in DNA repair: localizes to sites of DNA double-strand breaks in response to DNA damage to promote the repair of DNA double-strand breaks. Acts by promoting non-homologous end joining (NHEJ) and inhibiting homologous recombination (HR) repair. The sequence is that of Structural maintenance of chromosomes flexible hinge domain-containing protein 1 from Homo sapiens (Human).